The chain runs to 425 residues: E3 ubiquitin-protein ligase CBLL2 (425 aa).

An RING-type zinc finger spans residues Cys-57 to Arg-97. The segment at Cys-96 to Arg-154 is HYB domain. The C2H2-type zinc finger occupies Phe-112 to His-138. 2 disordered regions span residues Asp-241–Pro-297 and Thr-382–Tyr-425. Residues Pro-398 to Ser-408 are compositionally biased toward pro residues. Basic residues predominate over residues Gly-412–Tyr-425.

As to quaternary structure, homodimer. As to expression, exclusively expressed in testis and sperm, including spermatocytes, round and elongated spermatids, and Leydig cells.

It localises to the cytoplasm. It catalyses the reaction S-ubiquitinyl-[E2 ubiquitin-conjugating enzyme]-L-cysteine + [acceptor protein]-L-lysine = [E2 ubiquitin-conjugating enzyme]-L-cysteine + N(6)-ubiquitinyl-[acceptor protein]-L-lysine.. The protein operates within protein modification; protein ubiquitination. Functionally, E3 ubiquitin ligase catalyzing the covalent attachment of ubiquitin moieties onto substrate proteins. May operate on tyrosine-phosphorylated SRC substrates. In Homo sapiens (Human), this protein is E3 ubiquitin-protein ligase CBLL2.